The following is a 115-amino-acid chain: Ribonuclease P protein component (115 aa).

Belongs to the RnpA family. Consists of a catalytic RNA component (M1 or rnpB) and a protein subunit.

The enzyme catalyses Endonucleolytic cleavage of RNA, removing 5'-extranucleotides from tRNA precursor.. In terms of biological role, RNaseP catalyzes the removal of the 5'-leader sequence from pre-tRNA to produce the mature 5'-terminus. It can also cleave other RNA substrates such as 4.5S RNA. The protein component plays an auxiliary but essential role in vivo by binding to the 5'-leader sequence and broadening the substrate specificity of the ribozyme. The sequence is that of Ribonuclease P protein component from Symbiobacterium thermophilum (strain DSM 24528 / JCM 14929 / IAM 14863 / T).